The sequence spans 238 residues: Uridylate kinase (238 aa).

12–15 (KLSG) is a binding site for ATP. Glycine 54 contributes to the UMP binding site. ATP-binding residues include glycine 55 and arginine 59. UMP-binding positions include aspartate 74 and 135–142 (TGNPFFTT). ATP is bound by residues threonine 162, tyrosine 168, and aspartate 171.

This sequence belongs to the UMP kinase family. Homohexamer.

The protein localises to the cytoplasm. The catalysed reaction is UMP + ATP = UDP + ADP. Its pathway is pyrimidine metabolism; CTP biosynthesis via de novo pathway; UDP from UMP (UMPK route): step 1/1. Its activity is regulated as follows. Inhibited by UTP. Catalyzes the reversible phosphorylation of UMP to UDP. The protein is Uridylate kinase of Dechloromonas aromatica (strain RCB).